Consider the following 147-residue polypeptide: Protein archease (147 aa).

The Ca(2+) site is built by Asp17, Asp146, and Ile147.

The protein belongs to the archease family.

Activates the tRNA-splicing ligase complex by facilitating the enzymatic turnover of catalytic subunit RtcB. Acts by promoting the guanylylation of RtcB, a key intermediate step in tRNA ligation. Can also alter the NTP specificity of RtcB such that ATP, dGTP or ITP is used efficiently. The sequence is that of Protein archease from Pyrobaculum calidifontis (strain DSM 21063 / JCM 11548 / VA1).